The chain runs to 115 residues: Ig heavy chain V-III region J606 (115 aa).

Residues 1-114 (EVKLEESGGG…WGQGTLVTVS (114 aa)) form the Ig-like domain. The cysteines at positions 22 and 98 are disulfide-linked.

This is Ig heavy chain V-III region J606 from Mus musculus (Mouse).